The sequence spans 321 residues: Phospho-N-acetylmuramoyl-pentapeptide-transferase (321 aa).

The next 9 membrane-spanning stretches (helical) occupy residues 1–21, 53–73, 77–97, 110–130, 145–165, 174–194, 200–220, 226–248, and 301–321; these read MSLL…FALM, TMGG…VGGW, LQPT…LGFW, GLKA…LTLV, LGVW…LVGF, GLDG…AVIA, YNVM…FVYN, IFMG…ILLH, and IDIV…ATII.

Belongs to the glycosyltransferase 4 family. MraY subfamily. Mg(2+) serves as cofactor.

The protein resides in the cell membrane. It catalyses the reaction UDP-N-acetyl-alpha-D-muramoyl-L-alanyl-gamma-D-glutamyl-L-lysyl-D-alanyl-D-alanine + di-trans,octa-cis-undecaprenyl phosphate = Mur2Ac(oyl-L-Ala-gamma-D-Glu-L-Lys-D-Ala-D-Ala)-di-trans,octa-cis-undecaprenyl diphosphate + UMP. It functions in the pathway cell wall biogenesis; peptidoglycan biosynthesis. Its function is as follows. Catalyzes the initial step of the lipid cycle reactions in the biosynthesis of the cell wall peptidoglycan: transfers peptidoglycan precursor phospho-MurNAc-pentapeptide from UDP-MurNAc-pentapeptide onto the lipid carrier undecaprenyl phosphate, yielding undecaprenyl-pyrophosphoryl-MurNAc-pentapeptide, known as lipid I. The sequence is that of Phospho-N-acetylmuramoyl-pentapeptide-transferase from Lactiplantibacillus plantarum (strain ATCC BAA-793 / NCIMB 8826 / WCFS1) (Lactobacillus plantarum).